Reading from the N-terminus, the 246-residue chain is DNA repair protein RecO (246 aa).

The protein belongs to the RecO family.

Its function is as follows. Involved in DNA repair and RecF pathway recombination. The chain is DNA repair protein RecO from Methylobacterium nodulans (strain LMG 21967 / CNCM I-2342 / ORS 2060).